Here is a 383-residue protein sequence, read N- to C-terminus: Probable purine permease 16 (383 aa).

10 helical membrane passes run 30–50 (ISVF…MLLL), 72–92 (WTQA…FFIL), 113–133 (VLSL…LYAL), 138–158 (VGWG…SAFI), 166–186 (WIII…PAFA), 203–223 (LILI…QLGF), 247–267 (ICVS…SGEF), 297–317 (VWAV…ADVV), 322–342 (SPVV…EFGW), and 346–363 (GALL…YSLH).

The protein belongs to the purine permeases (TC 2.A.7.14) family.

Its subcellular location is the membrane. This Arabidopsis thaliana (Mouse-ear cress) protein is Probable purine permease 16 (PUP16).